The chain runs to 90 residues: Inner kinetochore subunit MHF1 (90 aa).

The protein belongs to the TAF9 family. CENP-S/MHF1 subfamily. The MHF histone-fold complex is a heterotetramer of 2 MHF1-MHF2 heterodimers. Together with MPH1/FANCM, forms the FANCM-MHF complex. Component of the inner kinetochore constitutive centromere-associated network (CCAN) (also known as central kinetochore CTF19 complex in yeast), which is composed of at least AME1, CHL4, CNN1, CTF3, CTF19, IML3, MCM16, MCM21, MCM22, MHF1, MHF2, MIF2, NKP1, NKP2, OKP1 and WIP1.

In terms of biological role, dsDNA-binding component of a FANCM-MHF complex involved in DNA damage repair and genome maintenance. FANCM-MHF promotes gene conversion at blocked replication forks, probably by reversal of the stalled fork. Component of the kinetochore, a multiprotein complex that assembles on centromeric DNA and attaches chromosomes to spindle microtubules, mediating chromosome segregation and sister chromatid segregation during meiosis and mitosis. Component of the inner kinetochore constitutive centromere-associated network (CCAN), which serves as a structural platform for outer kinetochore assembly. The protein is Inner kinetochore subunit MHF1 of Saccharomyces cerevisiae (strain ATCC 204508 / S288c) (Baker's yeast).